The primary structure comprises 448 residues: tRNA methyltransferase 10 homolog C (448 aa).

The transit peptide at 1 to 48 (MAFVNTLLRTIRCSAVHTLVQEGRSLSLLKASHQLTQSRKIMLSNHVR) directs the protein to the mitochondrion. The stretch at 137 to 165 (REVMKTNRKEKKKELKESKSKIESLDQLE) forms a coiled coil. The segment at 144–167 (RKEKKKELKESKSKIESLDQLETK) is disordered. In terms of domain architecture, SAM-dependent MTase TRM10-type spans 190 to 382 (QRWKCVQAMK…SFVPNRKHDG (193 aa)). Positions 429-448 (ERTDDTSIRSTRKRWWEEEN) are disordered.

It belongs to the class IV-like SAM-binding methyltransferase superfamily. TRM10 family. Component of mitochondrial ribonuclease P. Interacts with HSD17B10/MRPP2.

It is found in the mitochondrion matrix. It localises to the mitochondrion nucleoid. The enzyme catalyses adenosine(9) in tRNA + S-adenosyl-L-methionine = N(1)-methyladenosine(9) in tRNA + S-adenosyl-L-homocysteine + H(+). It catalyses the reaction guanosine(9) in tRNA + S-adenosyl-L-methionine = N(1)-methylguanosine(9) in tRNA + S-adenosyl-L-homocysteine + H(+). The catalysed reaction is an adenosine in mRNA + S-adenosyl-L-methionine = an N(1)-methyladenosine in mRNA + S-adenosyl-L-homocysteine + H(+). Its function is as follows. Mitochondrial tRNA N(1)-methyltransferase involved in mitochondrial tRNA maturation. Component of mitochondrial ribonuclease P, which cleaves tRNA molecules in their 5'-ends. Together with hsd17b10/mrpp2, forms a subcomplex of the mitochondrial ribonuclease P, named MRPP1-MRPP2 subcomplex, which displays functions that are independent of the ribonuclease P activity. The MRPP1-MRPP2 subcomplex catalyzes the formation of N(1)-methylguanine and N(1)-methyladenine at position 9 (m1G9 and m1A9, respectively) in tRNAs; trmt10c/mrpp1 acting as the catalytic N(1)-methyltransferase subunit. The MRPP1-MRPP2 subcomplex also acts as a tRNA maturation platform: following 5'-end cleavage by the mitochondrial ribonuclease P complex, the MRPP1-MRPP2 subcomplex enhances the efficiency of 3'-processing catalyzed by ELAC2, retains the tRNA product after elac2 processing and presents the nascent tRNA to the mitochondrial CCA tRNA nucleotidyltransferase TRNT1 enzyme. In addition to tRNA N(1)-methyltransferase activity, trmt10c/mrpp1 also acts as a mRNA N(1)-methyltransferase by mediating methylation of adenosine residues at the N(1) position of MT-ND5 mRNA. This is tRNA methyltransferase 10 homolog C from Xenopus tropicalis (Western clawed frog).